The chain runs to 232 residues: 2-C-methyl-D-erythritol 4-phosphate cytidylyltransferase (232 aa).

Belongs to the IspD/TarI cytidylyltransferase family. IspD subfamily.

The enzyme catalyses 2-C-methyl-D-erythritol 4-phosphate + CTP + H(+) = 4-CDP-2-C-methyl-D-erythritol + diphosphate. It participates in isoprenoid biosynthesis; isopentenyl diphosphate biosynthesis via DXP pathway; isopentenyl diphosphate from 1-deoxy-D-xylulose 5-phosphate: step 2/6. Its function is as follows. Catalyzes the formation of 4-diphosphocytidyl-2-C-methyl-D-erythritol from CTP and 2-C-methyl-D-erythritol 4-phosphate (MEP). The chain is 2-C-methyl-D-erythritol 4-phosphate cytidylyltransferase from Bacillus velezensis (strain DSM 23117 / BGSC 10A6 / LMG 26770 / FZB42) (Bacillus amyloliquefaciens subsp. plantarum).